A 155-amino-acid polypeptide reads, in one-letter code: uncharacterized protein (155 aa).

An N-acetyltransferase domain is found at 6–155 (TCVRNARLAD…CDEIAMVKTL (150 aa)).

This sequence belongs to the acetyltransferase family.

This is an uncharacterized protein from Chlorobaculum tepidum (strain ATCC 49652 / DSM 12025 / NBRC 103806 / TLS) (Chlorobium tepidum).